The following is a 601-amino-acid chain: UvrABC system protein C (601 aa).

Residues 15-94 form the GIY-YIG domain; that stretch reads LQPGVYLFKN…IKSYKPRYNI (80 aa). Residues 202–237 enclose the UVR domain; that stretch reads QEIVREKEKEMAMAARSLEFEKAARLRDQIQSLRQL.

Belongs to the UvrC family. Interacts with UvrB in an incision complex.

It is found in the cytoplasm. Its function is as follows. The UvrABC repair system catalyzes the recognition and processing of DNA lesions. UvrC both incises the 5' and 3' sides of the lesion. The N-terminal half is responsible for the 3' incision and the C-terminal half is responsible for the 5' incision. This is UvrABC system protein C from Syntrophomonas wolfei subsp. wolfei (strain DSM 2245B / Goettingen).